The sequence spans 173 residues: bZIP transcription factor 44 (173 aa).

Positions 1 to 65 (MNNKTEMGSS…SRMRKQKHLD (65 aa)) are disordered. A compositionally biased stretch (low complexity) spans 8–22 (GSSTSGNCSSVSTTG). Basic and acidic residues predominate over residues 30 to 41 (SDLRQRDLIDER). Positions 39–102 (DERKRKRKQS…VTIEAENDIL (64 aa)) constitute a bZIP domain. The segment at 41–62 (RKRKRKQSNRESARRSRMRKQK) is basic motif. The leucine-zipper stretch occupies residues 67 to 81 (LTAQVTHLRKENAQI).

As to quaternary structure, forms heterodimers with BZIP1, BZIP9, BZIP10, BZIP25 and BZIP63. Expressed in the micropylar endosperm and radicle tip in early germinating seeds.

The protein localises to the nucleus. In terms of biological role, transcription factor that binds to the DNA G-box motif 5'-CACGTG-3' of MAN7 promoter. Involved in the positive regulation of seed germination through MAN7 gene activation. MAN7 is required for both, loosening of the micropylar endosperm, and rupture of the seed coat in germinating seeds. This chain is bZIP transcription factor 44, found in Arabidopsis thaliana (Mouse-ear cress).